Reading from the N-terminus, the 502-residue chain is Cytochrome P450 71B10 (502 aa).

A helical transmembrane segment spans residues 1 to 21 (MTVLWFVSLILLISILLVAVK). Residue Cys-443 participates in heme binding.

The protein belongs to the cytochrome P450 family. It depends on heme as a cofactor.

Its subcellular location is the membrane. This Arabidopsis thaliana (Mouse-ear cress) protein is Cytochrome P450 71B10 (CYP71B10).